The primary structure comprises 809 residues: Acyl-homoserine lactone acylase QuiP (809 aa).

Residues 1 to 26 (MASPAFSHFLPRFGVAAAVASALSLA) form the signal peptide. The Nucleophile role is filled by serine 261.

It belongs to the peptidase S45 family. As to quaternary structure, heterodimer of an alpha subunit and a beta subunit processed from the same precursor.

The protein localises to the periplasm. It carries out the reaction an N-acyl-L-homoserine lactone + H2O = L-homoserine lactone + a carboxylate. Its function is as follows. Catalyzes the deacylation of acyl-homoserine lactone (AHL or acyl-HSL), releasing homoserine lactone (HSL) and the corresponding fatty acid. Possesses a specificity for the degradation of long-chain acyl-HSLs (side chains of seven or more carbons in length). The sequence is that of Acyl-homoserine lactone acylase QuiP (quiP) from Pseudomonas fluorescens (strain ATCC BAA-477 / NRRL B-23932 / Pf-5).